The sequence spans 403 residues: Peptidyl-prolyl cis-trans isomerase FKBP8 (403 aa).

The interval 26–54 is disordered; the sequence is VLDGVDDAEEEDDLSGLPPLEDMGQPTVE. Acidic residues predominate over residues 28–39; it reads DGVDDAEEEDDL. The 86-residue stretch at 110-195 folds into the PPIase FKBP-type domain; the sequence is GQVVTVHLQM…CLEVTLKTAE (86 aa). The TPR 1 repeat unit spans residues 212 to 245; sequence ANRKRECGNAHYQRADFVLAANSYDLAIKAITSN. Glycyl lysine isopeptide (Lys-Gly) (interchain with G-Cter in ubiquitin) cross-links involve residues Lys-240, Lys-262, Lys-264, and Lys-275. TPR repeat units follow at residues 263-296 and 297-330; these read VKCL…QPDN and IKAL…EPSN. Position 287 is a phosphoserine (Ser-287). Residues Lys-298, Lys-305, Lys-325, Lys-331, Lys-339, Lys-342, and Lys-343 each participate in a glycyl lysine isopeptide (Lys-Gly) (interchain with G-Cter in ubiquitin) cross-link. A helical transmembrane segment spans residues 381–401; that stretch reads WLFGATAVALGGVALSVVIAA.

As to quaternary structure, homomultimers or heteromultimers (Potential). Forms heterodimer with calmodulin. When activated by calmodulin and calcium, interacts with the BH4 domain of BCL2 and weakly with BCLX isoform Bcl-X(L). Does not bind and inhibit calcineurin. Interacts with ZFYVE27; may negatively regulate ZFYVE27 phosphorylation. It depends on Ca(2+) as a cofactor. Post-translationally, ubiquitinated by PRKN during mitophagy, leading to its degradation and enhancement of mitophagy. Deubiquitinated by USP30.

Its subcellular location is the mitochondrion membrane. The catalysed reaction is [protein]-peptidylproline (omega=180) = [protein]-peptidylproline (omega=0). Its function is as follows. Constitutively inactive PPiase, which becomes active when bound to calmodulin and calcium. Seems to act as a chaperone for BCL2, targets it to the mitochondria and modulates its phosphorylation state. The BCL2/FKBP8/calmodulin/calcium complex probably interferes with the binding of BCL2 to its targets. The active form of FKBP8 may therefore play a role in the regulation of apoptosis. This chain is Peptidyl-prolyl cis-trans isomerase FKBP8 (Fkbp8), found in Rattus norvegicus (Rat).